We begin with the raw amino-acid sequence, 484 residues long: Cobyric acid synthase (484 aa).

The GATase cobBQ-type domain maps to 251–438; that stretch reads ALKVAVPVLS…LHGLFGSDPY (188 aa). Cys-333 acts as the Nucleophile in catalysis. His-430 is an active-site residue.

Belongs to the CobB/CobQ family. CobQ subfamily.

It participates in cofactor biosynthesis; adenosylcobalamin biosynthesis. In terms of biological role, catalyzes amidations at positions B, D, E, and G on adenosylcobyrinic A,C-diamide. NH(2) groups are provided by glutamine, and one molecule of ATP is hydrogenolyzed for each amidation. This is Cobyric acid synthase from Sinorhizobium medicae (strain WSM419) (Ensifer medicae).